Consider the following 477-residue polypeptide: Cysteine--tRNA ligase (477 aa).

A Zn(2+)-binding site is contributed by Cys-29. Positions 31 to 41 (PTVYNYFHVGN) match the 'HIGH' region motif. Residues Cys-209, His-234, and Glu-238 each contribute to the Zn(2+) site. Positions 267-271 (KMSKS) match the 'KMSKS' region motif. Lys-270 contacts ATP.

This sequence belongs to the class-I aminoacyl-tRNA synthetase family. As to quaternary structure, monomer. Zn(2+) is required as a cofactor.

The protein localises to the cytoplasm. It carries out the reaction tRNA(Cys) + L-cysteine + ATP = L-cysteinyl-tRNA(Cys) + AMP + diphosphate. This chain is Cysteine--tRNA ligase, found in Desulfitobacterium hafniense (strain DSM 10664 / DCB-2).